We begin with the raw amino-acid sequence, 208 residues long: TnpB-like protein MJ0012 (208 aa).

C83, C86, C100, and C103 together coordinate Zn(2+).

The protein belongs to the transposase 35 family.

The chain is TnpB-like protein MJ0012 from Methanocaldococcus jannaschii (strain ATCC 43067 / DSM 2661 / JAL-1 / JCM 10045 / NBRC 100440) (Methanococcus jannaschii).